The primary structure comprises 585 residues: MAKLLIMSIVSFCFIFLLLLFFRYILKRYFNYMLNYKVWYLTLLAGLIPFIPIKFSLFKFNNVNNQAPTVESKSHDLNHNINTTKPIQEFATDIHKFNWDSIDNISTVIWIVLVIILSFKFLKALLYLKYLKKQSLYLNENEKNKIDTILFNHQYKKNIVIRKAETIQSPITFWYGKYIILIPSSYFKSVIDKRLKYIILHEYAHAKNRDTLHLIIFNIFSIIMSYNPLVHIVKRKIIHDNEVEADRFVLNNINKNEFKTYAESIMDSVLNVPFFNKNILSHSFNGKKSLLKRRLINIKEANLKKQSKLILIFICIFTFLLMVIQSQFLMGQSITDYNYKKPLHNDYQILDKSKIFGSNSGSFVMYSMKKDKYYIYNEKESRKRYSPNSTYKIYLAMFGLDRHIINDENSRMSWNHKHYPFDAWNKEQDLNTAMQNSVNWYFERISDQIPKNYTATQLKQLNYGNKNLGSYKSYWMEDSLKISNLEQVIVFKNMMEQNNHFSKKAKNQLSSSLLIKKNEKYELYGKTGTGIVNGKYNNGWFVGYVITNHDKYYFATHLSDGKPSGKNAELISEKILKEMGVLNGQ.

The Extracellular portion of the chain corresponds to 1–4 (MAKL). The helical transmembrane segment at 5 to 22 (LIMSIVSFCFIFLLLLFF) threads the bilayer. Topologically, residues 23–31 (RYILKRYFN) are cytoplasmic. The chain crosses the membrane as a helical span at residues 32–48 (YMLNYKVWYLTLLAGLI). Residues 49 to 104 (PFIPIKFSLFKFNNVNNQAPTVESKSHDLNHNINTTKPIQEFATDIHKFNWDSIDN) are Extracellular-facing. The helical transmembrane segment at 105–122 (ISTVIWIVLVIILSFKFL) threads the bilayer. Topologically, residues 123-311 (KALLYLKYLK…NLKKQSKLIL (189 aa)) are cytoplasmic. The helical transmembrane segment at 312–328 (IFICIFTFLLMVIQSQF) threads the bilayer. The Extracellular segment spans residues 329-585 (LMGQSITDYN…LKEMGVLNGQ (257 aa)). Residues 331 to 585 (GQSITDYNYK…LKEMGVLNGQ (255 aa)) form a beta-lactam antibiotic sensor domain region. The active-site Acyl-ester intermediate is the Ser-389. Position 392 is an N6-carboxylysine (Lys-392).

The protein belongs to the peptidase M56 family. Carboxylation occurs on two lysine residues. Carboxylation at 'Lys-392' activates the active site serine residue for acylation. On acylation, the lysine side chain experiences a spontaneous decarboxylation that entraps the sensor in its activated state.

The protein localises to the cell membrane. Its function is as follows. Integral membrane protein involved in sensing of the presence of beta-lactam antibiotics and transduction of the information to the cytoplasm. Mechanistically, activation of the signal transducer involves acylation of a serine in the C-terminal sensor domain upon binding of the beta-lactam antibiotic. In turn, a conformational change occurs and the signal is transmitted from the cell surface to the cytoplasm. There, the zinc protease domain is activated and initiates autoproteolysis as well as cleavage of the transcriptional repressor BlaI leading to derepression of antibiotic resistance genes. This is Regulatory protein BlaR1 (blaR1) from Staphylococcus aureus.